The primary structure comprises 254 residues: Nickel import ATP-binding protein NikD (254 aa).

The ABC transporter domain maps to 2–241 (PQQIELRNIT…PKHTVTRSLV (240 aa)). Residue 36-43 (GGSGSGKS) coordinates ATP.

The protein belongs to the ABC transporter superfamily. Nickel importer (TC 3.A.1.5.3) family. The complex is composed of two ATP-binding proteins (NikD and NikE), two transmembrane proteins (NikB and NikC) and a solute-binding protein (NikA).

The protein resides in the cell inner membrane. It carries out the reaction Ni(2+)(out) + ATP + H2O = Ni(2+)(in) + ADP + phosphate + H(+). In terms of biological role, part of the ABC transporter complex NikABCDE involved in nickel import. Responsible for energy coupling to the transport system. This is Nickel import ATP-binding protein NikD from Shigella flexneri.